The following is an 89-amino-acid chain: Small ribosomal subunit protein bS20 (89 aa).

The protein belongs to the bacterial ribosomal protein bS20 family.

In terms of biological role, binds directly to 16S ribosomal RNA. In Solidesulfovibrio magneticus (strain ATCC 700980 / DSM 13731 / RS-1) (Desulfovibrio magneticus), this protein is Small ribosomal subunit protein bS20.